We begin with the raw amino-acid sequence, 714 residues long: Nucleolin (714 aa).

Residues methionine 1–glutamate 303 form a disordered region. 3 positions are modified to N6-acetyllysine: lysine 9, lysine 15, and lysine 16. Positions valine 24 to glycine 42 are enriched in acidic residues. Phosphoserine is present on residues serine 28, serine 34, serine 40, and serine 41. Residues alanine 55 to proline 106 show a composition bias toward low complexity. Residues alanine 57–valine 64 form repeat 1. Residues alanine 57–lysine 134 are 8 X 8 AA tandem repeats of X-T-P-X-K-K-X-X. At serine 66 the chain carries Phosphoserine. A phosphothreonine mark is found at threonine 68, threonine 75, threonine 83, and threonine 91. A run of 3 repeats spans residues proline 74–alanine 81, valine 82–alanine 89, and alanine 90–valine 97. An N6-acetyllysine modification is found at lysine 95. Threonine 98 is modified (phosphothreonine). The 5; truncated repeat unit spans residues threonine 98–valine 103. Lysine 101 carries the post-translational modification N6-acetyllysine. Repeat 6 spans residues alanine 104–alanine 111. Threonine 105 carries the post-translational modification Phosphothreonine. The residue at position 108 (lysine 108) is an N6-acetyllysine. Position 112 is a phosphothreonine (threonine 112). Lysine 115 carries the N6-acetyllysine modification. 2 repeat units span residues alanine 119–alanine 126 and valine 127–lysine 134. Threonine 120 carries the phosphothreonine modification. Position 123 is an N6-acetyllysine (lysine 123). Residues serine 144 and serine 157 each carry the phosphoserine modification. Positions serine 144–glutamate 170 are enriched in acidic residues. The span at proline 171–alanine 187 shows a compositional bias: low complexity. The residue at position 188 (serine 188) is a Phosphoserine. Acidic residues predominate over residues serine 188–methionine 216. At threonine 219 the chain carries Phosphothreonine. Positions glutamate 240–glutamate 272 are enriched in acidic residues. The segment covering methionine 285–glycine 301 has biased composition (basic and acidic residues). Lysine 298 participates in a covalent cross-link: Glycyl lysine isopeptide (Lys-Gly) (interchain with G-Cter in SUMO1); alternate. Lysine 298 is covalently cross-linked (Glycyl lysine isopeptide (Lys-Gly) (interchain with G-Cter in SUMO2); alternate). The residue at position 302 (serine 302) is a Phosphoserine. 2 consecutive RRM domains span residues phenylalanine 308–glycine 384 and arginine 394–glutamate 467. At lysine 319 the chain carries N6-acetyllysine. Residue lysine 325 forms a Glycyl lysine isopeptide (Lys-Gly) (interchain with G-Cter in SUMO1); alternate linkage. Lysine 325 is covalently cross-linked (Glycyl lysine isopeptide (Lys-Gly) (interchain with G-Cter in SUMO2); alternate). N6-acetyllysine is present on lysine 349. A Phosphoserine modification is found at serine 357. Position 368 is a phosphothreonine (threonine 368). Lysine 371 participates in a covalent cross-link: Glycyl lysine isopeptide (Lys-Gly) (interchain with G-Cter in SUMO2). Lysine 378 is covalently cross-linked (Glycyl lysine isopeptide (Lys-Gly) (interchain with G-Cter in SUMO2); alternate). Lysine 378 carries the N6-acetyllysine; alternate modification. The residue at position 399 (lysine 399) is an N6-acetyllysine. Serine 402 carries the phosphoserine modification. At threonine 406 the chain carries Phosphothreonine. N6-acetyllysine is present on residues lysine 428 and lysine 445. 2 positions are modified to phosphoserine: serine 459 and serine 461. N6-acetyllysine is present on residues lysine 468 and lysine 477. In terms of domain architecture, RRM 3 spans lysine 486–proline 560. Lysine 513 participates in a covalent cross-link: Glycyl lysine isopeptide (Lys-Gly) (interchain with G-Cter in SUMO2); alternate. Lysine 513 carries the N6-acetyllysine; alternate modification. Position 521 is an N6-acetyllysine (lysine 521). At serine 563 the chain carries Phosphoserine. Lysine 572 is subject to N6-acetyllysine. In terms of domain architecture, RRM 4 spans lysine 572 to proline 647. A Glycyl lysine isopeptide (Lys-Gly) (interchain with G-Cter in SUMO2); alternate cross-link involves residue lysine 577. Lysine 577 carries the N6-acetyllysine; alternate modification. Serine 580 carries the phosphoserine modification. Residue lysine 589 forms a Glycyl lysine isopeptide (Lys-Gly) (interchain with G-Cter in SUMO1); alternate linkage. Lysine 589 is covalently cross-linked (Glycyl lysine isopeptide (Lys-Gly) (interchain with G-Cter in SUMO2); alternate). Serine 591 and serine 619 each carry phosphoserine. A Glycyl lysine isopeptide (Lys-Gly) (interchain with G-Cter in SUMO2) cross-link involves residue lysine 624. Residues leucine 642–glutamate 714 are disordered. Lysine 646 is subject to N6-acetyllysine. Residues glutamate 650 to aspartate 703 show a composition bias toward gly residues. Asymmetric dimethylarginine is present on residues arginine 656, arginine 660, arginine 666, arginine 670, arginine 674, arginine 680, arginine 682, arginine 688, and arginine 692. An Asymmetric dimethylarginine; alternate modification is found at arginine 695. Position 695 is an omega-N-methylarginine; alternate (arginine 695).

In terms of assembly, identified in a IGF2BP1-dependent mRNP granule complex containing untranslated mRNAs. Component of the SWAP complex that consists of NPM1, NCL/nucleolin, PARP1 and SWAP70. Component of a complex which is at least composed of HTATSF1/Tat-SF1, the P-TEFb complex components CDK9 and CCNT1, RNA polymerase II, SUPT5H, and NCL/nucleolin. Interacts with AICDA. Interacts with APTX. Interacts with C1QBP. Interacts with ERBB4. Interacts (via C-terminus) with FMR1 isoform 6 (via N-terminus). Interacts with GZF1; this interaction is important for nucleolar localization of GZF1. Interacts with NSUN2. Interacts with NVL. Interacts (via N-terminus domain) with SETX. Interacts (via RRM1 and C-terminal RRM4/Arg/Gly-rich domains) with TERT; the interaction is important for nucleolar localization of TERT. Interacts with WDR46. Interacts with ZFP36. Interacts with LRRC34. Interacts with RRP1B. Interacts with HNRNPU; this interaction occurs during mitosis. Interacts with RIOK1; RIOK1 recruits NCL to PRMT5 for symmetrically methylation. Interacts with ZBTB7B. Interacts with MDK; this interaction promotes NCL clustering and lateral movements of this complex into lipid rafts leading to MDK internalization. Interacts with HDGF. Interacts with ALKBH2. Interacts with IGFBP5; this interaction is necessary for IGFBP5 localization to the nucleus. Interacts with DDX24 (when ubiquitinated); this interaction may be important during ribosome biogenesis. Some glutamate residues are glycylated by TTLL8. This modification occurs exclusively on glutamate residues and results in a glycine chain on the gamma-carboxyl group. Post-translationally, symmetrically methylated by PRMT5.

It localises to the nucleus. The protein localises to the nucleolus. The protein resides in the cytoplasm. In terms of biological role, nucleolin is the major nucleolar protein of growing eukaryotic cells. It is found associated with intranucleolar chromatin and pre-ribosomal particles. It induces chromatin decondensation by binding to histone H1. It is thought to play a role in pre-rRNA transcription and ribosome assembly. May play a role in the process of transcriptional elongation. Binds RNA oligonucleotides with 5'-UUAGGG-3' repeats more tightly than the telomeric single-stranded DNA 5'-TTAGGG-3' repeats. The chain is Nucleolin (NCL) from Mesocricetus auratus (Golden hamster).